Reading from the N-terminus, the 257-residue chain is Acetylglutamate kinase (257 aa).

Residues 43-44 (GG), Arg-65, and Asn-157 each bind substrate. ATP contacts are provided by residues 180 to 185 (DVSGIL) and 208 to 210 (IIT).

This sequence belongs to the acetylglutamate kinase family. ArgB subfamily. Homodimer.

The protein resides in the cytoplasm. It catalyses the reaction N-acetyl-L-glutamate + ATP = N-acetyl-L-glutamyl 5-phosphate + ADP. It functions in the pathway amino-acid biosynthesis; L-arginine biosynthesis; N(2)-acetyl-L-ornithine from L-glutamate: step 2/4. Functionally, catalyzes the ATP-dependent phosphorylation of N-acetyl-L-glutamate. The protein is Acetylglutamate kinase of Klebsiella pneumoniae (strain 342).